Here is a 325-residue protein sequence, read N- to C-terminus: 5-dehydro-2-deoxygluconokinase (325 aa).

Belongs to the carbohydrate kinase PfkB family.

It carries out the reaction 5-dehydro-2-deoxy-D-gluconate + ATP = 6-phospho-5-dehydro-2-deoxy-D-gluconate + ADP + H(+). It functions in the pathway polyol metabolism; myo-inositol degradation into acetyl-CoA; acetyl-CoA from myo-inositol: step 5/7. Functionally, catalyzes the phosphorylation of 5-dehydro-2-deoxy-D-gluconate (2-deoxy-5-keto-D-gluconate or DKG) to 6-phospho-5-dehydro-2-deoxy-D-gluconate (DKGP). The sequence is that of 5-dehydro-2-deoxygluconokinase (iolC) from Bacillus subtilis (strain 168).